The sequence spans 83 residues: Putative defensin-like protein 66 (83 aa).

Residues 1–22 form the signal peptide; sequence MGSSRLMITFIVVAMLAISSDL. 4 disulfide bridges follow: cysteine 38/cysteine 82, cysteine 42/cysteine 65, cysteine 51/cysteine 80, and cysteine 55/cysteine 81.

Belongs to the DEFL family.

Its subcellular location is the secreted. The protein is Putative defensin-like protein 66 of Arabidopsis thaliana (Mouse-ear cress).